The following is a 298-amino-acid chain: uncharacterized protein (298 aa).

An N-terminal signal peptide occupies residues 1-19 (MFRKFLFIQLLIVTSLVKA). The tract at residues 278 to 298 (RNNPPLKNNNAKSKNSYETYK) is disordered. The span at 279–298 (NNPPLKNNNAKSKNSYETYK) shows a compositional bias: low complexity.

It to R.prowazekii RP296.

This is an uncharacterized protein from Rickettsia prowazekii (strain Madrid E).